A 357-amino-acid chain; its full sequence is MVSSDSVNSRVETLAGSGISTIPKEYIRPKDELVNIGDIFEQEKNNEGPQVPTIDLKEIESDNEKVRAKCREKLKKAAVDWGVMHLVNHGISDELMDKVRKAGKAFFDLPIEQKEKYANDQASGKIQGYGSKLANNASGQLEWEDYFFHCVYPEDKRDLSIWPQTPADYIEATAEYAKQLRELATKVLKVLSLGLGLDEGRLEKEVGGLEELLLQMKINYYPKCPQPELALGVEAHTDVSALTFILHNMVPGLQLFYEGKWVTAKCVPNSIVMHIGDTLEILSNGKYKSILHRGMVNKEKVRISWAVFCEPPKEKIILKPLPETVSEDEPAMFPPRTFAEHIQHKLFRKSQEALLPK.

One can recognise a Fe2OG dioxygenase domain in the interval 212–311; it reads LLLQMKINYY…RISWAVFCEP (100 aa). Fe cation contacts are provided by H236, D238, and H292.

It belongs to the iron/ascorbate-dependent oxidoreductase family. The cofactor is Fe cation. Requires L-ascorbate as cofactor.

It catalyses the reaction a (2R,3S,4S)-leucoanthocyanidin + 2-oxoglutarate + O2 = a 4-H-anthocyanidin with a 3-hydroxy group + succinate + CO2 + 2 H2O. It participates in pigment biosynthesis; anthocyanin biosynthesis. Its function is as follows. Oxidation of leucoanthocyanidins into anthocyanidins. This is Leucoanthocyanidin dioxygenase (ANS) from Malus domestica (Apple).